Consider the following 151-residue polypeptide: Globin CTT-X (151 aa).

The Globin domain occupies 6–150 (TLDAHEVEQV…AFSVIFEVLE (145 aa)). His-64 and His-99 together coordinate heme b.

The protein belongs to the globin family. Homodimer.

This Chironomus thummi thummi (Midge) protein is Globin CTT-X (CTT-10).